Here is a 385-residue protein sequence, read N- to C-terminus: ELAV-like protein 4 (385 aa).

Positions 12–48 (TMEPQVSNGPTSNTSNGPSSNNRNCPSPMQTGAATDD) are disordered. The segment covering 18–33 (SNGPTSNTSNGPSSNN) has biased composition (low complexity). Residues 34–44 (RNCPSPMQTGA) show a composition bias toward polar residues. Serine 38 is subject to Phosphoserine. RRM domains lie at 51-129 (TNLI…YARP) and 137-217 (ANLY…FANN). Serine 233 is modified (phosphoserine). Residue arginine 248 is modified to Asymmetric dimethylarginine; by CARM1; alternate. Residue arginine 248 is modified to Omega-N-methylarginine; by CARM1; alternate. In terms of domain architecture, RRM 3 spans 302–380 (WCIFVYNLSP…RVLQVSFKTN (79 aa)).

This sequence belongs to the RRM elav family. Component of a TAU mRNP complex, at least composed of IGF2BP1, ELAVL4 and G3BP. Associates with the EIF4F cap-binding complex, composed of EIF4G, EIF4A, EIF4E and PABP. Within the EIF4F cap-binding complex, interacts with EIF4A. Interacts with SMN (via Tudor domain) in an RNA-independent manner; the interaction is required for localization of ELAVL4 to RNA granules. Interacts with MAP1 light chain LC1 (via C-terminus); the interaction contributes to the association of ELAVL4 with microtubules. Interacts with MAP1 light chain LC2. Post-translationally, methylated by CARM1, which leads to reduced RNA-binding activity and enhanced interaction with SMN. Methylation at Arg-248 by CARM1 weakens protective binding to the 3'UTR of CDKN1A mRNA and down-regulates CDKN1A protein expression, thereby maintaining cells in a proliferative state. Methylation is inhibited by NGF, which facilitates neurite outgrowth. Expressed in the brain, including the hippocampus, and in pancreatic beta cells (at protein level). Expressed in pyramidal neurons of the hippocampal CA3 and CA1 region and in the hilus but not in dentate granule cells (at protein level). Expressed in the dorsal root ganglion and the spinal cord (at protein level). Expressed in neural stem and progenitor cells (at protein level). Expressed in radial glia-like cells and in transient amplifying cells in the subventricular zone (SVZ), and in immature neurons both in the SVZ and the rostral migratory stream as well as in mature neurons in the olfactory bulb (at protein level). Expressed in testis and in the brain, including the hippocampus, the neocortex and the cerebellum. Expressed in lower- but not upper-layer primary neurons of the mature neocortex, in the hippocampal regions CA1-3 and the dentate gyrus. Expressed in the mitral and granule cells of the olfactory bulb, cerebral cortex, entorhinal cortex, thalamus, medial habenula, amygdala, granule cells of the cerebellum, pons, olivary nucleus, dorsal and ventral spinal cord and in dorsal root ganglia. Expressed in motor neurons. Isoform 4: Expressed in the brain. Isoform 5: Expressed in the brain. Isoform 6: Expressed in the brain. Isoform 7: Expressed in the brain. Isoform 8: Expressed in the brain. Isoform 9: Expressed in the brain. Isoform 10: Expressed in the brain. Isoform 11: Expressed in the brain.

The protein localises to the cytoplasm. Its subcellular location is the perikaryon. It localises to the cell projection. The protein resides in the dendrite. It is found in the axon. The protein localises to the growth cone. Its function is as follows. RNA-binding protein that is involved in the post-transcriptional regulation of mRNAs. Plays a role in the regulation of mRNA stability, alternative splicing and translation. Binds to AU-rich element (ARE) sequences in the 3' untranslated region (3'UTR) of target mRNAs, including GAP43, VEGF, FOS, CDKN1A and ACHE mRNA. Many of the target mRNAs are coding for RNA-binding proteins, transcription factors and proteins involved in RNA processing and/or neuronal development and function. By binding to the mRNA 3'UTR, decreases mRNA deadenylation and thereby contributes to the stabilization of mRNA molecules and their protection from decay. Also binds to the polyadenylated (poly(A)) tail in the 3'UTR of mRNA, thereby increasing its affinity for mRNA binding. Mainly plays a role in neuron-specific RNA processing by stabilization of mRNAs such as GAP43, ACHE and mRNAs of other neuronal proteins, thereby contributing to the differentiation of neural progenitor cells, nervous system development, learning and memory mechanisms. Involved in the negative regulation of the proliferative activity of neuronal stem cells and in the positive regulation of neuronal differentiation of neural progenitor cells. Promotes neuronal differentiation of neural stem/progenitor cells in the adult subventricular zone of the hippocampus by binding to and stabilizing SATB1 mRNA. Binds and stabilizes MSI1 mRNA in neural stem cells. Exhibits increased binding to ACHE mRNA during neuronal differentiation, thereby stabilizing ACHE mRNA and enhancing its expression. Protects CDKN1A mRNA from decay by binding to its 3'-UTR. May bind to APP and BACE1 mRNAS and the BACE1AS lncRNA and enhance their stabilization. Plays a role in neurite outgrowth and in the establishment and maturation of dendritic arbors, thereby contributing to neocortical and hippocampal circuitry function. Stabilizes GAP43 mRNA and protects it from decay during postembryonic development in the brain. By promoting the stabilization of GAP43 mRNA, plays a role in NGF-mediated neurite outgrowth. Binds to BDNF long 3'UTR mRNA, thereby leading to its stabilization and increased dendritic translation after activation of PKC. By increasing translation of BDNF after nerve injury, may contribute to nerve regeneration. Acts as a stabilizing factor by binding to the 3'UTR of NOVA1 mRNA, thereby increasing its translation and enhancing its functional activity in neuron-specific splicing. Stimulates translation of mRNA in a poly(A)- and cap-dependent manner, possibly by associating with the EIF4F cap-binding complex. May also negatively regulate translation by binding to the 5'UTR of Ins2 mRNA, thereby repressing its translation. Upon glucose stimulation, Ins2 mRNA is released from ELAVL4 and translational inhibition is abolished. Also plays a role in the regulation of alternative splicing. May regulate alternative splicing of CALCA pre-mRNA into Calcitonin and Calcitonin gene-related peptide 1 (CGRP) by competing with splicing regulator TIAR for binding to U-rich sequences of CALCA pre-mRNA. The chain is ELAV-like protein 4 (Elavl4) from Mus musculus (Mouse).